Reading from the N-terminus, the 196-residue chain is UMP-CMP kinase (196 aa).

Residue 13–18 (GAGKGT) coordinates ATP. Ser-33 carries the post-translational modification Phosphoserine. The segment at 33–63 (SAGELLRDERKNPDSQYGELIEKYIKDGKIV) is NMP. A ribonucleoside 5'-phosphate is bound at residue Arg-39. N6-acetyllysine occurs at positions 43 and 55. Residues 61–63 (KIV) and 93–96 (GFPR) each bind a ribonucleoside 5'-phosphate. Asn-100 serves as a coordination point for CMP. Lys-106 bears the N6-succinyllysine mark. The interval 133–143 (ERGKSSGRSDD) is LID. Arg-134 lines the ATP pocket. 2 residues coordinate a ribonucleoside 5'-phosphate: Arg-140 and Arg-151. Lys-179 lines the ATP pocket. Ser-180 is subject to Phosphoserine.

It belongs to the adenylate kinase family. UMP-CMP kinase subfamily. Monomer. It depends on Mg(2+) as a cofactor.

It localises to the nucleus. Its subcellular location is the cytoplasm. The catalysed reaction is CMP + ATP = CDP + ADP. It carries out the reaction dCMP + ATP = dCDP + ADP. The enzyme catalyses UMP + ATP = UDP + ADP. It catalyses the reaction a 2'-deoxyribonucleoside 5'-diphosphate + ATP = a 2'-deoxyribonucleoside 5'-triphosphate + ADP. The catalysed reaction is a ribonucleoside 5'-diphosphate + ATP = a ribonucleoside 5'-triphosphate + ADP. Its function is as follows. Catalyzes the phosphorylation of pyrimidine nucleoside monophosphates at the expense of ATP. Plays an important role in de novo pyrimidine nucleotide biosynthesis. Has preference for UMP and CMP as phosphate acceptors. Also displays broad nucleoside diphosphate kinase activity. This is UMP-CMP kinase from Sus scrofa (Pig).